Here is a 292-residue protein sequence, read N- to C-terminus: 4'-phosphopantetheinyl transferase 1 (292 aa).

This sequence belongs to the P-Pant transferase superfamily.

The catalysed reaction is apo-[ACP] + CoA = holo-[ACP] + adenosine 3',5'-bisphosphate + H(+). Functionally, transfers the 4'-phosphopantetheine moiety from coenzyme A to a Ser of an acyl-carrier-protein. The enzyme is able to transfer the cofactor to a broad range of enzymes with acyl- or peptidyl-carrier protein domains. Required for primary biological processes such as growth and asexual/sexual development, and activates target enzymes involved in the synthesis of metabolites such as fatty acids, nonribosomal peptides and polyketides such as the gamma-pyrones fusapyrone (FPY) and deoxyfusapyrone (dFPY). The chain is 4'-phosphopantetheinyl transferase 1 from Fusarium mangiferae (Mango malformation disease fungus).